The following is a 107-amino-acid chain: Thiosulfate sulfurtransferase GlpE (107 aa).

The region spanning 19 to 107 (QDLNAVLVDI…WHKAGLPVEK (89 aa)) is the Rhodanese domain. The active-site Cysteine persulfide intermediate is the Cys-67.

The protein belongs to the GlpE family.

Its subcellular location is the cytoplasm. It catalyses the reaction thiosulfate + hydrogen cyanide = thiocyanate + sulfite + 2 H(+). The catalysed reaction is thiosulfate + [thioredoxin]-dithiol = [thioredoxin]-disulfide + hydrogen sulfide + sulfite + 2 H(+). Functionally, transferase that catalyzes the transfer of sulfur from thiosulfate to thiophilic acceptors such as cyanide or dithiols. May function in a CysM-independent thiosulfate assimilation pathway by catalyzing the conversion of thiosulfate to sulfite, which can then be used for L-cysteine biosynthesis. The chain is Thiosulfate sulfurtransferase GlpE from Aliivibrio fischeri (strain ATCC 700601 / ES114) (Vibrio fischeri).